Consider the following 482-residue polypeptide: Probable glycine dehydrogenase (decarboxylating) subunit 2 (482 aa).

Residue lysine 269 is modified to N6-(pyridoxal phosphate)lysine.

This sequence belongs to the GcvP family. C-terminal subunit subfamily. The glycine cleavage system is composed of four proteins: P, T, L and H. In this organism, the P 'protein' is a heterodimer of two subunits. Pyridoxal 5'-phosphate serves as cofactor.

It carries out the reaction N(6)-[(R)-lipoyl]-L-lysyl-[glycine-cleavage complex H protein] + glycine + H(+) = N(6)-[(R)-S(8)-aminomethyldihydrolipoyl]-L-lysyl-[glycine-cleavage complex H protein] + CO2. In terms of biological role, the glycine cleavage system catalyzes the degradation of glycine. The P protein binds the alpha-amino group of glycine through its pyridoxal phosphate cofactor; CO(2) is released and the remaining methylamine moiety is then transferred to the lipoamide cofactor of the H protein. In Pelodictyon phaeoclathratiforme (strain DSM 5477 / BU-1), this protein is Probable glycine dehydrogenase (decarboxylating) subunit 2.